Consider the following 69-residue polypeptide: Probable rubredoxin HupI (69 aa).

In terms of domain architecture, Rubredoxin-like spans 16-67 (VTRLECGICWTVYDPADGDDVAQIAPGTPFAALPEEWHCPNCDAPKSKFMAI). 4 residues coordinate Fe cation: Cys-21, Cys-24, Cys-54, and Cys-57.

This sequence belongs to the rubredoxin family. Requires Fe(3+) as cofactor.

Its function is as follows. Could be an electron transport intermediate in hydrogen oxidation. The protein is Probable rubredoxin HupI (hupI) of Bradyrhizobium diazoefficiens (strain JCM 10833 / BCRC 13528 / IAM 13628 / NBRC 14792 / USDA 110).